A 227-amino-acid chain; its full sequence is Cytochrome c oxidase subunit 2 (227 aa).

The Mitochondrial intermembrane segment spans residues 1 to 14; sequence MAYPFELGFQDATS. Residues 15–45 form a helical membrane-spanning segment; it reads PIMEELLHFHDHTLMIVFLISSLVLYIISLM. Residues 46-59 are Mitochondrial matrix-facing; that stretch reads LTTKLTHTSTMDAQ. A helical membrane pass occupies residues 60–87; sequence EVETIWTILPAIILILIALPSLRVLYMM. Residues 88-227 are Mitochondrial intermembrane-facing; the sequence is DEINDPSLTV…HFENWSSSML (140 aa). Residues H161, C196, E198, C200, H204, and M207 each contribute to the Cu cation site. Residue E198 coordinates Mg(2+).

The protein belongs to the cytochrome c oxidase subunit 2 family. As to quaternary structure, component of the cytochrome c oxidase (complex IV, CIV), a multisubunit enzyme composed of 14 subunits. The complex is composed of a catalytic core of 3 subunits MT-CO1, MT-CO2 and MT-CO3, encoded in the mitochondrial DNA, and 11 supernumerary subunits COX4I, COX5A, COX5B, COX6A, COX6B, COX6C, COX7A, COX7B, COX7C, COX8 and NDUFA4, which are encoded in the nuclear genome. The complex exists as a monomer or a dimer and forms supercomplexes (SCs) in the inner mitochondrial membrane with NADH-ubiquinone oxidoreductase (complex I, CI) and ubiquinol-cytochrome c oxidoreductase (cytochrome b-c1 complex, complex III, CIII), resulting in different assemblies (supercomplex SCI(1)III(2)IV(1) and megacomplex MCI(2)III(2)IV(2)). Found in a complex with TMEM177, COA6, COX18, COX20, SCO1 and SCO2. Interacts with TMEM177 in a COX20-dependent manner. Interacts with COX20. Interacts with COX16. Requires Cu cation as cofactor.

The protein resides in the mitochondrion inner membrane. The enzyme catalyses 4 Fe(II)-[cytochrome c] + O2 + 8 H(+)(in) = 4 Fe(III)-[cytochrome c] + 2 H2O + 4 H(+)(out). Functionally, component of the cytochrome c oxidase, the last enzyme in the mitochondrial electron transport chain which drives oxidative phosphorylation. The respiratory chain contains 3 multisubunit complexes succinate dehydrogenase (complex II, CII), ubiquinol-cytochrome c oxidoreductase (cytochrome b-c1 complex, complex III, CIII) and cytochrome c oxidase (complex IV, CIV), that cooperate to transfer electrons derived from NADH and succinate to molecular oxygen, creating an electrochemical gradient over the inner membrane that drives transmembrane transport and the ATP synthase. Cytochrome c oxidase is the component of the respiratory chain that catalyzes the reduction of oxygen to water. Electrons originating from reduced cytochrome c in the intermembrane space (IMS) are transferred via the dinuclear copper A center (CU(A)) of subunit 2 and heme A of subunit 1 to the active site in subunit 1, a binuclear center (BNC) formed by heme A3 and copper B (CU(B)). The BNC reduces molecular oxygen to 2 water molecules using 4 electrons from cytochrome c in the IMS and 4 protons from the mitochondrial matrix. In Sciurus carolinensis (Eastern gray squirrel), this protein is Cytochrome c oxidase subunit 2 (MT-CO2).